We begin with the raw amino-acid sequence, 317 residues long: Metaxin-1 (317 aa).

Glycyl lysine isopeptide (Lys-Gly) (interchain with G-Cter in ubiquitin) cross-links involve residues lysine 38, lysine 41, and lysine 78. Residues 164-184 (EELEKELYREARECLTLLSQR) form a helical membrane-spanning segment.

Belongs to the metaxin family. In terms of assembly, interacts with MTX2/metaxin-2. Associates with the mitochondrial contact site and cristae organizing system (MICOS) complex, composed of at least MICOS10/MIC10, CHCHD3/MIC19, CHCHD6/MIC25, APOOL/MIC27, IMMT/MIC60, APOO/MIC23/MIC26 and QIL1/MIC13. This complex was also known under the names MINOS or MitOS complex. The MICOS complex associates with mitochondrial outer membrane proteins SAMM50, MTX1 and MTX2 (together described as components of the mitochondrial outer membrane sorting assembly machinery (SAM) complex) and DNAJC11, mitochondrial inner membrane protein TMEM11 and with HSPA9. The MICOS and SAM complexes together with DNAJC11 are part of a large protein complex spanning both membranes termed the mitochondrial intermembrane space bridging (MIB) complex. Interacts with ARMC1. Post-translationally, ubiquitinated by PRKN during mitophagy, leading to its degradation and enhancement of mitophagy. Deubiquitinated by USP30.

The protein localises to the mitochondrion outer membrane. Functionally, involved in transport of proteins into the mitochondrion. Essential for embryonic development. The chain is Metaxin-1 (MTX1) from Macaca fascicularis (Crab-eating macaque).